The sequence spans 860 residues: Valine--tRNA ligase (860 aa).

The 'HIGH' region motif lies at 43 to 53; the sequence is PTVSGALHVGH. Residues 469–491 form a disordered region; that stretch reads LPVDPSSDAPTGYQESQRNQPGG. The 'KMSKS' region motif lies at 574–578; it reads KMSKS. Residue Lys577 participates in ATP binding.

This sequence belongs to the class-I aminoacyl-tRNA synthetase family. ValS type 2 subfamily. In terms of assembly, monomer.

The protein resides in the cytoplasm. The catalysed reaction is tRNA(Val) + L-valine + ATP = L-valyl-tRNA(Val) + AMP + diphosphate. Functionally, catalyzes the attachment of valine to tRNA(Val). As ValRS can inadvertently accommodate and process structurally similar amino acids such as threonine, to avoid such errors, it has a 'posttransfer' editing activity that hydrolyzes mischarged Thr-tRNA(Val) in a tRNA-dependent manner. The sequence is that of Valine--tRNA ligase from Salinispora tropica (strain ATCC BAA-916 / DSM 44818 / JCM 13857 / NBRC 105044 / CNB-440).